The chain runs to 65 residues: Protein MalX (65 aa).

The protein is Protein MalX (malX) of Klebsiella pneumoniae.